The sequence spans 291 residues: uncharacterized protein (291 aa).

4 helical membrane-spanning segments follow: residues Ile-13–Ile-33, Ile-84–Ile-104, Leu-111–Ile-131, and Leu-219–Leu-239.

Its subcellular location is the cell membrane. This is an uncharacterized protein from Ureaplasma parvum serovar 3 (strain ATCC 700970).